Here is a 126-residue protein sequence, read N- to C-terminus: Small ribosomal subunit protein uS13 (126 aa).

Residues 99 to 126 are disordered; sequence LRGQSTKNNARTRKGKRKTVANKKRVTK. Residues 108–126 show a composition bias toward basic residues; that stretch reads ARTRKGKRKTVANKKRVTK.

It belongs to the universal ribosomal protein uS13 family. As to quaternary structure, part of the 30S ribosomal subunit. Forms a loose heterodimer with protein S19. Forms two bridges to the 50S subunit in the 70S ribosome.

In terms of biological role, located at the top of the head of the 30S subunit, it contacts several helices of the 16S rRNA. In the 70S ribosome it contacts the 23S rRNA (bridge B1a) and protein L5 of the 50S subunit (bridge B1b), connecting the 2 subunits; these bridges are implicated in subunit movement. Contacts the tRNAs in the A and P-sites. This Azobacteroides pseudotrichonymphae genomovar. CFP2 protein is Small ribosomal subunit protein uS13.